A 524-amino-acid chain; its full sequence is Na(+)/H(+) antiporter NhaG (524 aa).

11 helical membrane-spanning segments follow: residues 6–26 (LHHIFELGFFVVMIAAGITAI), 33–53 (PYPIALVIVGTIIGLVHIPLF), 59–79 (FITEGEVFNFVIITLFLPALL), 98–118 (VLALFGGTLISFLIVGFSSMW), 126–146 (AAFVFAALMSATDPVSVLSIF), 169–189 (LAVVLFNISAFYLMTYLDLGI), 193–213 (GLGLWEFVKVISLGLIIGGVL), 242–262 (FLLAEMAGASGVIAVVVAALI), 283–303 (FWDVAALLANSLVFLMVGLEI), 312–332 (WGLAIMAIVIVLIARSAAVYI), and 374–394 (DILVFAFSVVLFSLVVQGLTI).

Belongs to the monovalent cation:proton antiporter 1 (CPA1) transporter (TC 2.A.36) family.

The protein resides in the cell membrane. Na(+)/H(+) antiporter that extrudes sodium in exchange for external protons. Can also transport lithium. This chain is Na(+)/H(+) antiporter NhaG (nhaG), found in Bacillus atrophaeus.